Consider the following 605-residue polypeptide: DNA primase (605 aa).

The CHC2-type zinc-finger motif lies at 38–62; sequence CPFHDEKTPSFTVSEDKQICHCFGC. The Toprim domain maps to 260–341; it reads DEIVLLEGFM…NVFVIQLPSG (82 aa). Mg(2+)-binding residues include glutamate 266, aspartate 310, and aspartate 312.

The protein belongs to the DnaG primase family. In terms of assembly, monomer. Interacts with DnaB. The cofactor is Zn(2+). It depends on Mg(2+) as a cofactor.

It catalyses the reaction ssDNA + n NTP = ssDNA/pppN(pN)n-1 hybrid + (n-1) diphosphate.. Its function is as follows. RNA polymerase that catalyzes the synthesis of short RNA molecules used as primers for DNA polymerase during DNA replication. The protein is DNA primase of Staphylococcus aureus (strain Mu50 / ATCC 700699).